The primary structure comprises 169 residues: Cell cycle link protein (169 aa).

The segment at 9–22 (LPEELREKIVHDHL) is binding to host SKP1 protein. The short motif at 110–114 (LSCRE) is the LXCXE motif, interaction with host RBR element.

Belongs to the nanovirus Clink protein family. As to quaternary structure, interacts with host SKP1. Interacts (via LXCXE domain) with host retinoblastoma-related protein 1 (RBR1). Interacts (via LXCXE domain) with retinoblastoma-related proteins (RBR).

Interacts with and disrupts the function of host retinoblastoma-related proteins RBR, which are key regulators of the cell cycle. Induces transcriptional activation of E2F-regulated S-phase and G2/M-phase-specific genes. Inactivation of the ability of RBR to arrest the cell cycle leads to the stimulation of viral DNA replication. This chain is Cell cycle link protein (DNA-C), found in Faba bean necrotic yellows virus (isolate Egyptian EV1-93) (FBNYV).